Here is a 331-residue protein sequence, read N- to C-terminus: Lipoyl synthase (331 aa).

Residues 1–14 (MSTQLDASQPSNDV) show a composition bias toward polar residues. The tract at residues 1–32 (MSTQLDASQPSNDVASPAAYDPTQKQKSQAKT) is disordered. [4Fe-4S] cluster contacts are provided by C78, C83, C89, C104, C108, C111, and S318. The region spanning 89-307 (CFGKGTATFM…EREAYAMGFS (219 aa)) is the Radical SAM core domain.

It belongs to the radical SAM superfamily. Lipoyl synthase family. It depends on [4Fe-4S] cluster as a cofactor.

The protein localises to the cytoplasm. The catalysed reaction is [[Fe-S] cluster scaffold protein carrying a second [4Fe-4S](2+) cluster] + N(6)-octanoyl-L-lysyl-[protein] + 2 oxidized [2Fe-2S]-[ferredoxin] + 2 S-adenosyl-L-methionine + 4 H(+) = [[Fe-S] cluster scaffold protein] + N(6)-[(R)-dihydrolipoyl]-L-lysyl-[protein] + 4 Fe(3+) + 2 hydrogen sulfide + 2 5'-deoxyadenosine + 2 L-methionine + 2 reduced [2Fe-2S]-[ferredoxin]. The protein operates within protein modification; protein lipoylation via endogenous pathway; protein N(6)-(lipoyl)lysine from octanoyl-[acyl-carrier-protein]: step 2/2. Catalyzes the radical-mediated insertion of two sulfur atoms into the C-6 and C-8 positions of the octanoyl moiety bound to the lipoyl domains of lipoate-dependent enzymes, thereby converting the octanoylated domains into lipoylated derivatives. The chain is Lipoyl synthase from Bordetella avium (strain 197N).